A 97-amino-acid polypeptide reads, in one-letter code: Class II hydrophobin A (97 aa).

Positions M1 to A15 are cleaved as a signal peptide. Disulfide bonds link C30/C79, C40/C53, and C80/C91.

It belongs to the cerato-ulmin hydrophobin family.

It is found in the secreted. It localises to the cell wall. The protein localises to the vacuole. Its subcellular location is the cytoplasmic vesicle. Functionally, aerial growth, conidiation, and dispersal of filamentous fungi in the environment rely upon a capability of their secreting small amphipathic proteins called hydrophobins (HPBs) with low sequence identity. Class I can self-assemble into an outermost layer of rodlet bundles on aerial cell surfaces, conferring cellular hydrophobicity that supports fungal growth, development and dispersal; whereas Class II form highly ordered films at water-air interfaces through intermolecular interactions but contribute nothing to the rodlet structure. Hyd2A contributes to certain cell wall-related features, such as hydrophobicity but is not involved in cell wall-related events during fungal proliferation in host hemocoel. Does not contribute to conidial hydrophobicity. Involved in insect hemocoel colonization independent of cell hydrophobicity, as well as in the asexual development. The protein is Class II hydrophobin A of Beauveria bassiana (strain ARSEF 2860) (White muscardine disease fungus).